Here is a 129-residue protein sequence, read N- to C-terminus: Urease subunit beta (129 aa).

The protein belongs to the urease beta subunit family. Heterotrimer of UreA (gamma), UreB (beta) and UreC (alpha) subunits. Three heterotrimers associate to form the active enzyme.

Its subcellular location is the cytoplasm. The enzyme catalyses urea + 2 H2O + H(+) = hydrogencarbonate + 2 NH4(+). It participates in nitrogen metabolism; urea degradation; CO(2) and NH(3) from urea (urease route): step 1/1. This chain is Urease subunit beta, found in Photorhabdus laumondii subsp. laumondii (strain DSM 15139 / CIP 105565 / TT01) (Photorhabdus luminescens subsp. laumondii).